We begin with the raw amino-acid sequence, 180 residues long: Oligoribonuclease (180 aa).

An Exonuclease domain is found at 7–170 (LIWIDLEMTG…DDIRDSINEL (164 aa)). The active site involves Y128.

The protein belongs to the oligoribonuclease family.

It localises to the cytoplasm. Functionally, 3'-to-5' exoribonuclease specific for small oligoribonucleotides. The protein is Oligoribonuclease of Marinobacter nauticus (strain ATCC 700491 / DSM 11845 / VT8) (Marinobacter aquaeolei).